A 407-amino-acid polypeptide reads, in one-letter code: tRNA(Ile)-lysidine synthase (407 aa).

Residue 36–41 (SGGRDS) participates in ATP binding.

This sequence belongs to the tRNA(Ile)-lysidine synthase family.

It is found in the cytoplasm. The enzyme catalyses cytidine(34) in tRNA(Ile2) + L-lysine + ATP = lysidine(34) in tRNA(Ile2) + AMP + diphosphate + H(+). In terms of biological role, ligates lysine onto the cytidine present at position 34 of the AUA codon-specific tRNA(Ile) that contains the anticodon CAU, in an ATP-dependent manner. Cytidine is converted to lysidine, thus changing the amino acid specificity of the tRNA from methionine to isoleucine. The protein is tRNA(Ile)-lysidine synthase of Tropheryma whipplei (strain TW08/27) (Whipple's bacillus).